The primary structure comprises 213 residues: uncharacterized protein (213 aa).

The chain crosses the membrane as a helical span at residues 22 to 42 (WFGLSMVSIAVIFGPLTGAHV). The NPA 1 motif lies at 43 to 45 (NPA). 3 consecutive transmembrane segments (helical) span residues 63-83 (VYII…WLLF), 112-132 (NLLS…TLNH), and 138-158 (GVAM…FGGL). The NPA 2 motif lies at 164–166 (NPA). The chain crosses the membrane as a helical span at residues 188-208 (FDYAWVPVLRPVIGAILAAWL).

The protein belongs to the MIP/aquaporin (TC 1.A.8) family.

It localises to the cell membrane. This is an uncharacterized protein from Haemophilus influenzae (strain ATCC 51907 / DSM 11121 / KW20 / Rd).